A 103-amino-acid chain; its full sequence is UPF0145 protein BCE33L0904 (103 aa).

Belongs to the UPF0145 family.

In Bacillus cereus (strain ZK / E33L), this protein is UPF0145 protein BCE33L0904.